A 222-amino-acid polypeptide reads, in one-letter code: ATP-dependent dethiobiotin synthetase BioD 2 (222 aa).

Residue Thr17 participates in Mg(2+) binding. Residue Lys38 is part of the active site. Thr42 contacts substrate. Residues Asp55 and Glu112 each contribute to the Mg(2+) site. ATP is bound by residues Asp55, 112–115 (EGCG), 172–173 (NR), 201–203 (PYL), and Glu208.

It belongs to the dethiobiotin synthetase family. Homodimer. Mg(2+) is required as a cofactor.

Its subcellular location is the cytoplasm. It catalyses the reaction (7R,8S)-7,8-diammoniononanoate + CO2 + ATP = (4R,5S)-dethiobiotin + ADP + phosphate + 3 H(+). It participates in cofactor biosynthesis; biotin biosynthesis; biotin from 7,8-diaminononanoate: step 1/2. Catalyzes a mechanistically unusual reaction, the ATP-dependent insertion of CO2 between the N7 and N8 nitrogen atoms of 7,8-diaminopelargonic acid (DAPA, also called 7,8-diammoniononanoate) to form a ureido ring. The polypeptide is ATP-dependent dethiobiotin synthetase BioD 2 (Yersinia pestis).